The following is a 357-amino-acid chain: Hydroxyproline O-arabinosyltransferase RDN1 (357 aa).

A helical; Signal-anchor transmembrane segment spans residues 13–33 (LLMLLMVLGFSFATYNLVFMM).

Expressed in the vasculature of leaves, petioles, stems and roots. Expressed in the vascular cylinder throughout the root, and nodule vasculature.

Its subcellular location is the golgi apparatus membrane. The enzyme catalyses trans-4-hydroxy-L-prolyl-[protein] + UDP-beta-L-arabinofuranose = O-(beta-L-arabinofuranosyl)-trans-4-hydroxy-L-prolyl-[protein] + UDP + H(+). Functionally, probable glycosyltransferase involved in the O-arabinosylation of several proteins including extensins and small signaling peptides. Catalyzes the transfer of the initial L-arabinose to the hydroxyl group of Hyp residues. Probably involved in the arabinosylation of CLE12, a signaling peptide that moves from root to shoot, to interact with SUNN receptor kinase signaling that regulates nodulation. Involved in long distance nodulation signaling events. Involved in the autoregulation of nodulation (AON), a long distance systemic signaling from root to shoot and back again, which allows legumes to limit the number of root nodules formed based on available nitrogen and previous rhizobial colonization. Functions in the root, upstream of the shoot receptor kinase SUNN and via CLE peptide, to control AON. This Medicago truncatula (Barrel medic) protein is Hydroxyproline O-arabinosyltransferase RDN1.